Consider the following 234-residue polypeptide: ATP synthase subunit a 2 (234 aa).

Transmembrane regions (helical) follow at residues 29–49 (FFQHVTHTWLVMAILIGVGLL), 90–110 (LIATLALFLLVSNLIGLIPGF), 116–136 (SLNTNAALAVGVFLVTHIVGV), 147–167 (FMGPVWWLTPLILPIELIGHL), 186–206 (IVLMIFFSLVPLLLPIPMMLM), and 207–227 (GILVAFIQTFVFMLLSMIYIA).

Belongs to the ATPase A chain family. F-type ATPases have 2 components, CF(1) - the catalytic core - and CF(0) - the membrane proton channel. CF(1) has five subunits: alpha(3), beta(3), gamma(1), delta(1), epsilon(1). CF(0) has three main subunits: a(1), b(2) and c(9-12). The alpha and beta chains form an alternating ring which encloses part of the gamma chain. CF(1) is attached to CF(0) by a central stalk formed by the gamma and epsilon chains, while a peripheral stalk is formed by the delta and b chains.

It is found in the cell inner membrane. Its function is as follows. Key component of the proton channel; it plays a direct role in the translocation of protons across the membrane. The chain is ATP synthase subunit a 2 from Syntrophotalea carbinolica (strain DSM 2380 / NBRC 103641 / GraBd1) (Pelobacter carbinolicus).